Consider the following 229-residue polypeptide: Flagellar L-ring protein (229 aa).

Residues 1-23 (MSPLTRIALALAASAALVLALTA) form the signal peptide. Cys-24 carries the N-palmitoyl cysteine lipid modification. The S-diacylglycerol cysteine moiety is linked to residue Cys-24.

This sequence belongs to the FlgH family. As to quaternary structure, the basal body constitutes a major portion of the flagellar organelle and consists of four rings (L,P,S, and M) mounted on a central rod.

It localises to the cell outer membrane. It is found in the bacterial flagellum basal body. In terms of biological role, assembles around the rod to form the L-ring and probably protects the motor/basal body from shearing forces during rotation. The sequence is that of Flagellar L-ring protein from Anaeromyxobacter dehalogenans (strain 2CP-C).